The chain runs to 334 residues: N-acetylmuramoyl-L-alanine amidase sle1 (334 aa).

The N-terminal stretch at 1 to 25 (MQKKVIAAIIGTSAISAVAATQANA) is a signal peptide. Positions 27 to 70 (TTHTVKPGESVWAISNKYGISIAKLKSLNNLTSNLIFPNQVLKV) constitute a LysM 1 domain. Low complexity predominate over residues 71–86 (SGSSNSTSNSSRPSTN). Positions 71-90 (SGSSNSTSNSSRPSTNSGGG) are disordered. In terms of domain architecture, LysM 2 spans 91-134 (SYYTVQAGDSLSLIASKYGTTYQNIMRLNGLNNFFIYPGQKLKV). The tract at residues 137–156 (TASSSNSTSNSSRPSTNSSG) is disordered. One can recognise a LysM 3 domain in the interval 158 to 201 (SYYTVQAGDSLSLIASKYGTTYQNIMRLNGLNNFFIYPGQKLKV). A Peptidase C51 domain is found at 210-334 (GSTTTTNRGY…YQVNNYRYIH (125 aa)).

The protein resides in the secreted. It is found in the cell surface. The catalysed reaction is Hydrolyzes the link between N-acetylmuramoyl residues and L-amino acid residues in certain cell-wall glycopeptides.. Its function is as follows. Peptidoglycan hydrolase involved in the splitting of the septum during cell division. The polypeptide is N-acetylmuramoyl-L-alanine amidase sle1 (sle1) (Staphylococcus aureus (strain MRSA252)).